The primary structure comprises 292 residues: 4-diphosphocytidyl-2-C-methyl-D-erythritol kinase (292 aa).

Residue Lys20 is part of the active site. 103–113 (PMGGGIGGGSS) lines the ATP pocket. Residue Asp145 is part of the active site.

It belongs to the GHMP kinase family. IspE subfamily.

The catalysed reaction is 4-CDP-2-C-methyl-D-erythritol + ATP = 4-CDP-2-C-methyl-D-erythritol 2-phosphate + ADP + H(+). Its pathway is isoprenoid biosynthesis; isopentenyl diphosphate biosynthesis via DXP pathway; isopentenyl diphosphate from 1-deoxy-D-xylulose 5-phosphate: step 3/6. In terms of biological role, catalyzes the phosphorylation of the position 2 hydroxy group of 4-diphosphocytidyl-2C-methyl-D-erythritol. The polypeptide is 4-diphosphocytidyl-2-C-methyl-D-erythritol kinase (Cupriavidus taiwanensis (strain DSM 17343 / BCRC 17206 / CCUG 44338 / CIP 107171 / LMG 19424 / R1) (Ralstonia taiwanensis (strain LMG 19424))).